The chain runs to 199 residues: Protein GrpE (199 aa).

The segment covering 1-24 has biased composition (basic and acidic residues); sequence MSKQNKKDWKKFRDEHKEEHKVEN. Residues 1–52 are disordered; the sequence is MSKQNKKDWKKFRDEHKEEHKVENEILEEETDEESQHQEPALGHPSYTALEE.

The protein belongs to the GrpE family. In terms of assembly, homodimer.

The protein resides in the cytoplasm. Functionally, participates actively in the response to hyperosmotic and heat shock by preventing the aggregation of stress-denatured proteins, in association with DnaK and GrpE. It is the nucleotide exchange factor for DnaK and may function as a thermosensor. Unfolded proteins bind initially to DnaJ; upon interaction with the DnaJ-bound protein, DnaK hydrolyzes its bound ATP, resulting in the formation of a stable complex. GrpE releases ADP from DnaK; ATP binding to DnaK triggers the release of the substrate protein, thus completing the reaction cycle. Several rounds of ATP-dependent interactions between DnaJ, DnaK and GrpE are required for fully efficient folding. The sequence is that of Protein GrpE from Legionella pneumophila (strain Lens).